The primary structure comprises 228 residues: Demethylmenaquinone methyltransferase (228 aa).

S-adenosyl-L-methionine contacts are provided by residues T62, D80, 100–101, and S117; that span reads DA.

This sequence belongs to the class I-like SAM-binding methyltransferase superfamily. MenG/UbiE family.

It carries out the reaction a 2-demethylmenaquinol + S-adenosyl-L-methionine = a menaquinol + S-adenosyl-L-homocysteine + H(+). The protein operates within quinol/quinone metabolism; menaquinone biosynthesis; menaquinol from 1,4-dihydroxy-2-naphthoate: step 2/2. Methyltransferase required for the conversion of demethylmenaquinol (DMKH2) to menaquinol (MKH2). The chain is Demethylmenaquinone methyltransferase from Mycolicibacterium gilvum (strain PYR-GCK) (Mycobacterium gilvum (strain PYR-GCK)).